A 428-amino-acid chain; its full sequence is Probable glucose-6-phosphate isomerase (428 aa).

Glu269 serves as the catalytic Proton donor. Active-site residues include His290 and Lys401.

It belongs to the GPI family.

The protein resides in the cytoplasm. It carries out the reaction alpha-D-glucose 6-phosphate = beta-D-fructose 6-phosphate. It functions in the pathway carbohydrate biosynthesis; gluconeogenesis. It participates in carbohydrate degradation; glycolysis; D-glyceraldehyde 3-phosphate and glycerone phosphate from D-glucose: step 2/4. Functionally, catalyzes the reversible isomerization of glucose-6-phosphate to fructose-6-phosphate. This Natronomonas pharaonis (strain ATCC 35678 / DSM 2160 / CIP 103997 / JCM 8858 / NBRC 14720 / NCIMB 2260 / Gabara) (Halobacterium pharaonis) protein is Probable glucose-6-phosphate isomerase.